The sequence spans 488 residues: 3-octaprenyl-4-hydroxybenzoate carboxy-lyase (488 aa).

Asparagine 172 contacts Mn(2+). Prenylated FMN is bound by residues isoleucine 175 to arginine 177, arginine 189 to leucine 191, and arginine 194 to glycine 195. Glutamate 238 lines the Mn(2+) pocket. Catalysis depends on aspartate 287, which acts as the Proton donor.

The protein belongs to the UbiD family. In terms of assembly, homohexamer. Requires prenylated FMN as cofactor. Mn(2+) serves as cofactor.

The protein localises to the cell membrane. It carries out the reaction a 4-hydroxy-3-(all-trans-polyprenyl)benzoate + H(+) = a 2-(all-trans-polyprenyl)phenol + CO2. Its pathway is cofactor biosynthesis; ubiquinone biosynthesis. Its function is as follows. Catalyzes the decarboxylation of 3-octaprenyl-4-hydroxy benzoate to 2-octaprenylphenol, an intermediate step in ubiquinone biosynthesis. The sequence is that of 3-octaprenyl-4-hydroxybenzoate carboxy-lyase from Pseudomonas fluorescens (strain ATCC BAA-477 / NRRL B-23932 / Pf-5).